The primary structure comprises 346 residues: NADH-ubiquinone oxidoreductase chain 2 (346 aa).

10 helical membrane-spanning segments follow: residues 25–45 (NLLL…PLLA), 56–76 (ATKY…VIIL), 94–114 (LLNM…FHYW), 122–142 (IPLH…LSIL), 148–168 (LLNP…GAWG), 178–198 (IMAY…PYNP), 200–220 (LTLL…ITLM), 240–260 (ILTM…LTGF), 278–298 (LSTL…RLIY), and 325–345 (FILP…SQLI).

Belongs to the complex I subunit 2 family. In terms of assembly, core subunit of respiratory chain NADH dehydrogenase (Complex I) which is composed of 45 different subunits. Interacts with TMEM242.

It localises to the mitochondrion inner membrane. The enzyme catalyses a ubiquinone + NADH + 5 H(+)(in) = a ubiquinol + NAD(+) + 4 H(+)(out). Core subunit of the mitochondrial membrane respiratory chain NADH dehydrogenase (Complex I) which catalyzes electron transfer from NADH through the respiratory chain, using ubiquinone as an electron acceptor. Essential for the catalytic activity and assembly of complex I. This Rattus norvegicus (Rat) protein is NADH-ubiquinone oxidoreductase chain 2.